Reading from the N-terminus, the 1552-residue chain is ABC multidrug transporter lscH (1552 aa).

A run of 2 helical transmembrane segments spans residues 32–52 (ETILSILPSVLVIVVAPIPII) and 68–88 (WFKKISSICFITLSAALVGLW). The N-linked (GlcNAc...) asparagine glycan is linked to N91. A run of 8 helical transmembrane segments spans residues 100–120 (STPSAVLTFVLSLVYVLLSTI), 158–178 (HSAIPPVFASSLALRVVMLLL), 280–300 (LFQIGFTYAQPFLITAAIELA), 311–331 (NGYGLIGAYILVYSGIAVSVG), 413–433 (AACVMSVGFAIVVMVGTVFLA), 457–477 (ALASIKWLKISGLTDVAFSVI), 500–520 (ILSICTPILGPLLTFAVFAGI), and 528–548 (LTIAKVFTAFSIIVLLNSPLA). One can recognise an ABC transmembrane type-1 1 domain in the interval 280 to 559 (LFQIGFTYAQ…IVQALPQISG (280 aa)). Residues 573 to 655 (AEERHDPRST…PDANGDSRDA (83 aa)) are disordered. The span at 581–602 (STTTGTSPESNNGSQQTLSDKQ) shows a compositional bias: polar residues. N-linked (GlcNAc...) asparagine glycosylation occurs at N592. One can recognise an ABC transporter 1 domain in the interval 639–884 (GHLADTTPDA…AELGWADRDL (246 aa)). Residue 676 to 683 (GPVGCGKS) participates in ATP binding. N-linked (GlcNAc...) asparagine glycans are attached at residues N719 and N834. Residues 887–912 (QQEKPGKDELNHEHGEYSESAPEKLR) are compositionally biased toward basic and acidic residues. The segment at 887–917 (QQEKPGKDELNHEHGEYSESAPEKLRRSQTN) is disordered. The next 2 membrane-spanning stretches (helical) occupy residues 957–977 (GWLTITIFVIAICVYAFCDSF) and 1005–1025 (AVLGVGAVAACLIGTWQLFII). An ABC transmembrane type-1 2 domain is found at 963 to 1241 (IFVIAICVYA…ATITSWVTLE (279 aa)). An N-linked (GlcNAc...) asparagine glycan is attached at N1028. 4 helical membrane-spanning segments follow: residues 1076–1096 (AALGVVMALSFGIAQFILVCV), 1100–1120 (YMAALLPFLLAVLYAIQHFYL), 1184–1204 (WITFAVNMVIMMLAVILIVLT), and 1210–1230 (AIGPGYVGIALSNILAFSATM). One can recognise an ABC transporter 2 domain in the interval 1295–1538 (IELDNVTASY…PTSIFKELYL (244 aa)). N-linked (GlcNAc...) asparagine glycosylation is found at N1299 and N1313. 1328–1335 (GRTGSGKS) is a binding site for ATP.

The protein belongs to the ABC transporter superfamily. ABCC family. Conjugate transporter (TC 3.A.1.208) subfamily.

The protein localises to the cell membrane. Its function is as follows. ABC multidrug transporter; part of the gene cluster that mediates the biosynthesis of the lipopeptide antibiotics leucinostatins that show extensive biological activities, including antimalarial, antiviral, antibacterial, antifungal, and antitumor activities, as well as phytotoxic. May be involved in the efflux of leucinostatins. This Purpureocillium lilacinum (Paecilomyces lilacinus) protein is ABC multidrug transporter lscH.